The primary structure comprises 1388 residues: DNA-directed RNA polymerase subunit beta (1388 aa).

It belongs to the RNA polymerase beta chain family. The RNAP catalytic core consists of 2 alpha, 1 beta, 1 beta' and 1 omega subunit. When a sigma factor is associated with the core the holoenzyme is formed, which can initiate transcription.

The enzyme catalyses RNA(n) + a ribonucleoside 5'-triphosphate = RNA(n+1) + diphosphate. Functionally, DNA-dependent RNA polymerase catalyzes the transcription of DNA into RNA using the four ribonucleoside triphosphates as substrates. This chain is DNA-directed RNA polymerase subunit beta, found in Stenotrophomonas maltophilia (strain K279a).